The following is a 1217-amino-acid chain: Inactive disease resistance protein RPS4 (1217 aa).

In terms of domain architecture, TIR spans Pro14 to Leu175. Residue Glu88 is part of the active site. Residues Glu211–Glu472 enclose the NB-ARC domain. LRR repeat units follow at residues His260–Glu285, Pro436–Asp459, Leu614–Pro636, Ile637–Thr659, Ala682–Met706, Met708–Leu728, Ile729–Ser749, Asp750–Arg774, Leu796–Ile818, Ser819–Tyr842, and Leu861–Cys887. Residues Thr1162 to Thr1195 are disordered. The Nuclear localization signal motif lies at Lys1170–Met1177.

In terms of assembly, interacts with EDS1.

It localises to the nucleus. The catalysed reaction is NAD(+) + H2O = ADP-D-ribose + nicotinamide + H(+). In Arabidopsis thaliana (Mouse-ear cress), this protein is Inactive disease resistance protein RPS4 (RPS4).